Reading from the N-terminus, the 210-residue chain is Fibrillarin-like rRNA/tRNA 2'-O-methyltransferase (210 aa).

Residues 72–73, 88–89, 113–114, and 134–137 each bind S-adenosyl-L-methionine; these read TT, EF, DA, and DVAT.

This sequence belongs to the methyltransferase superfamily. Fibrillarin family. In terms of assembly, interacts with nop5. Component of box C/D small ribonucleoprotein (sRNP) particles that contain rpl7ae, FlpA and nop5, plus a guide RNA.

Its function is as follows. Involved in pre-rRNA and tRNA processing. Utilizes the methyl donor S-adenosyl-L-methionine to catalyze the site-specific 2'-hydroxyl methylation of ribose moieties in rRNA and tRNA. Site specificity is provided by a guide RNA that base pairs with the substrate. Methylation occurs at a characteristic distance from the sequence involved in base pairing with the guide RNA. This chain is Fibrillarin-like rRNA/tRNA 2'-O-methyltransferase, found in Halobacterium salinarum (strain ATCC 29341 / DSM 671 / R1).